A 671-amino-acid chain; its full sequence is UvrABC system protein B (671 aa).

The Helicase ATP-binding domain maps to 26-183; that stretch reads EGLENGLAHQ…RRLSELQYSR (158 aa). Position 39–46 (39–46) interacts with ATP; that stretch reads GVTGSGKT. The Beta-hairpin signature appears at 92 to 115; it reads YYDYYQPEAYVPSSDTFIEKDASV. A Helicase C-terminal domain is found at 431-597; the sequence is QVDDLLSEIR…GLNKKIGDIL (167 aa). In terms of domain architecture, UVR spans 631–666; it reads DQKIRELEAKMYTYAQNLEFEQAAELRDQVHQLRQQ.

This sequence belongs to the UvrB family. As to quaternary structure, forms a heterotetramer with UvrA during the search for lesions. Interacts with UvrC in an incision complex.

The protein localises to the cytoplasm. The UvrABC repair system catalyzes the recognition and processing of DNA lesions. A damage recognition complex composed of 2 UvrA and 2 UvrB subunits scans DNA for abnormalities. Upon binding of the UvrA(2)B(2) complex to a putative damaged site, the DNA wraps around one UvrB monomer. DNA wrap is dependent on ATP binding by UvrB and probably causes local melting of the DNA helix, facilitating insertion of UvrB beta-hairpin between the DNA strands. Then UvrB probes one DNA strand for the presence of a lesion. If a lesion is found the UvrA subunits dissociate and the UvrB-DNA preincision complex is formed. This complex is subsequently bound by UvrC and the second UvrB is released. If no lesion is found, the DNA wraps around the other UvrB subunit that will check the other stand for damage. The chain is UvrABC system protein B from Yersinia pseudotuberculosis serotype IB (strain PB1/+).